The following is a 613-amino-acid chain: UBX domain-containing protein 3 (613 aa).

Disordered regions lie at residues 67-223 (PAAA…PINP) and 453-472 (MNEQ…RNQQ). Low complexity predominate over residues 68–82 (AAASGRNAGASSSSR). Positions 137 to 149 (THHRGAAIPRQKR) are enriched in basic residues. Over residues 158 to 169 (SSSGSSSASFSS) the composition is skewed to low complexity. The stretch at 452 to 517 (RMNEQSERRE…EEEECVRRQT (66 aa)) forms a coiled coil. The 80-residue stretch at 531–610 (PLAEIINVKF…KWPAREQIFV (80 aa)) folds into the UBX domain. Positions 582–584 (FPK) match the Interaction with cdc-48 motif.

Forms a complex composed of ubxn-3, cdc-48.1, ufd-1 and npl-4.1. Forms a complex composed of ubxn-3, cdc-48.1 and/or cdc-48.2 and substrate cdt-1. Interacts (via FPK motif) with cdc-48.1 (via N-terminus) and cdc-48.2 (via N-terminus). Interacts (via N-terminus) with cdt-1 and ubiquitinated protein substrates; the interaction is cdc-48-independent. May interact with npl-4.1. In terms of tissue distribution, expressed in the germline (at protein level). Expressed in spermatocytes but not in mature sperm (at protein level). Expressed in the spermatheca and nerve cells.

The protein resides in the nucleus. The protein localises to the cytoplasm. It localises to the perinuclear region. It is found in the chromosome. Its function is as follows. Ubiquitin-binding protein which acts as an adapter for ATPase cdc-48.1 and/or cdc-48.2, conferring substrate specificity. Together with ubxn-1 and ubxn-2, plays a role in hermaphrodite spermatogenesis probably by promoting the degradation of sex determination terminal factor tra-1. During mitosis, ensures the degradation of DNA licensing factor cdt-1 and the disassembly of the DNA replication CMG helicase complex by promoting the dissociation from chromatin of several of its components including cdc-45 and sld-5. This is UBX domain-containing protein 3 from Caenorhabditis elegans.